The chain runs to 374 residues: Chaperone protein DnaJ (374 aa).

Residues 5-70 (DYYEVLGVAK…QKRAAYDRYG (66 aa)) form the J domain. A CR-type zinc finger spans residues 134 to 212 (GFDTEIRVPS…CDGVGRIRRN (79 aa)). Residues Cys147, Cys150, Cys164, Cys167, Cys186, Cys189, Cys200, and Cys203 each coordinate Zn(2+). CXXCXGXG motif repeat units follow at residues 147 to 154 (CDTCHGSG), 164 to 171 (CRTCGGSG), 186 to 193 (CPTCHGTG), and 200 to 207 (CPSCDGVG).

This sequence belongs to the DnaJ family. Homodimer. Requires Zn(2+) as cofactor.

The protein resides in the cytoplasm. Participates actively in the response to hyperosmotic and heat shock by preventing the aggregation of stress-denatured proteins and by disaggregating proteins, also in an autonomous, DnaK-independent fashion. Unfolded proteins bind initially to DnaJ; upon interaction with the DnaJ-bound protein, DnaK hydrolyzes its bound ATP, resulting in the formation of a stable complex. GrpE releases ADP from DnaK; ATP binding to DnaK triggers the release of the substrate protein, thus completing the reaction cycle. Several rounds of ATP-dependent interactions between DnaJ, DnaK and GrpE are required for fully efficient folding. Also involved, together with DnaK and GrpE, in the DNA replication of plasmids through activation of initiation proteins. The polypeptide is Chaperone protein DnaJ (Bordetella petrii (strain ATCC BAA-461 / DSM 12804 / CCUG 43448)).